A 162-amino-acid polypeptide reads, in one-letter code: Regulator of sigma D (162 aa).

This sequence belongs to the Rsd/AlgQ family. As to quaternary structure, interacts with RpoD.

The protein resides in the cytoplasm. In terms of biological role, binds RpoD and negatively regulates RpoD-mediated transcription activation by preventing the interaction between the primary sigma factor RpoD with the catalytic core of the RNA polymerase and with promoter DNA. May be involved in replacement of the RNA polymerase sigma subunit from RpoD to RpoS during the transition from exponential growth to the stationary phase. This Salmonella typhi protein is Regulator of sigma D.